Consider the following 315-residue polypeptide: Protein sprouty homolog 2 (315 aa).

A compositionally biased stretch (polar residues) spans 1–15 (MEARAQSGNGSQPLL). Disordered regions lie at residues 1–39 (MEARAQSGNGSQPLLQTPRDGGRQRGEPDPRDALTQQVH) and 51–140 (NTNE…GSSF). Over residues 20-32 (DGGRQRGEPDPRD) the composition is skewed to basic and acidic residues. Residues 108-140 (SRSISTVSSGSRSSTRTSTSSSSSEQRLLGSSF) show a composition bias toward low complexity. A required for interaction with CAV1 region spans residues 118 to 315 (SRSSTRTSTS…VPPRNFEKPT (198 aa)). An SPR domain is found at 177–291 (RCEDCGKCKC…CYDRVNRPGC (115 aa)). The segment at 178–315 (CEDCGKCKCK…VPPRNFEKPT (138 aa)) is required for interaction with TESK1.

This sequence belongs to the sprouty family. In terms of assembly, forms heterodimers with SPRY1. Forms a tripartite complex containing GAB1, METTL13 and SPRY2. Within the complex interacts with METTL13. Interacts with RAF1. Interacts (via C-terminus) with TESK1 (via C-terminus); the interaction disrupts SPRY2 interaction with GRB2, potentially via disruption of SPRY2 serine dephosphorylation. Interacts with PPP2R1A/PP2A-A and PPP2CA/PP2A-C; the interaction with PPP2CA/PP2A-C is inhibited by interaction with TESK1, possibly by vesicular sequestration of SPRY2. Inhibition of the interaction with the serine/threonine-protein phosphatase 2A (PP2A) holoenzyme results in loss of PP2A-mediated dephosphorylation, resulting in the loss of SPRY2 interaction with GRB2. Interacts with GRB2. Interacts with CBL/C-CBL; the interaction inhibits CBL-mediated ubiquitination of EGFR. Interacts (via C-terminus) with CAV1 (via C-terminus). Cleaved at Pro-144 by the prolyl endopeptidase FAP (seprase) activity (in vitro).

The protein resides in the cytoplasm. Its subcellular location is the cytoskeleton. The protein localises to the cell projection. It is found in the ruffle membrane. In terms of biological role, antagonist of fibroblast growth factor (FGF) pathways via inhibition of FGF-mediated phosphorylation of ERK1/2. Thereby acts as an antagonist of FGF-induced retinal lens fiber differentiation, may inhibit limb bud outgrowth and may negatively modulate respiratory organogenesis. Inhibits TGFB-induced epithelial-to-mesenchymal transition in retinal lens epithelial cells. Inhibits CBL/C-CBL-mediated EGFR ubiquitination. This is Protein sprouty homolog 2 (SPRY2) from Macaca fascicularis (Crab-eating macaque).